Reading from the N-terminus, the 295-residue chain is UDP-N-acetylenolpyruvoylglucosamine reductase (295 aa).

An FAD-binding PCMH-type domain is found at lysine 24 to glycine 188. Arginine 168 is an active-site residue. The active-site Proton donor is the serine 217. Glutamate 287 is a catalytic residue.

This sequence belongs to the MurB family. FAD is required as a cofactor.

It is found in the cytoplasm. The enzyme catalyses UDP-N-acetyl-alpha-D-muramate + NADP(+) = UDP-N-acetyl-3-O-(1-carboxyvinyl)-alpha-D-glucosamine + NADPH + H(+). It participates in cell wall biogenesis; peptidoglycan biosynthesis. Functionally, cell wall formation. The sequence is that of UDP-N-acetylenolpyruvoylglucosamine reductase from Rickettsia akari (strain Hartford).